Reading from the N-terminus, the 518-residue chain is Integrator complex subunit 14 (518 aa).

Positions 2–204 (PTVVVMDVSL…KNVQSMFGKL (203 aa)) constitute a VWFA domain. Positions 10, 12, and 86 each coordinate Mg(2+). At Lys418 the chain carries N6-acetyllysine.

Belongs to the Integrator subunit 14 family. Component of the Integrator complex, composed of core subunits INTS1, INTS2, INTS3, INTS4, INTS5, INTS6, INTS7, INTS8, INTS9/RC74, INTS10, INTS11/CPSF3L, INTS12, INTS13, INTS14 and INTS15. The core complex associates with protein phosphatase 2A subunits PPP2CA and PPP2R1A, to form the Integrator-PP2A (INTAC) complex. INTS14 is part of the tail subcomplex, composed of INTS10, INTS13, INTS14 and INTS15. As to expression, strongly expressed in numerous cancer cells compared with their non-cancerous counterparts (lung, prostate, colon, stomach and skin).

It is found in the nucleus. Functionally, component of the integrator complex, a multiprotein complex that terminates RNA polymerase II (Pol II) transcription in the promoter-proximal region of genes. The integrator complex provides a quality checkpoint during transcription elongation by driving premature transcription termination of transcripts that are unfavorably configured for transcriptional elongation: the complex terminates transcription by (1) catalyzing dephosphorylation of the C-terminal domain (CTD) of Pol II subunit POLR2A/RPB1 and SUPT5H/SPT5, (2) degrading the exiting nascent RNA transcript via endonuclease activity and (3) promoting the release of Pol II from bound DNA. The integrator complex is also involved in terminating the synthesis of non-coding Pol II transcripts, such as enhancer RNAs (eRNAs), small nuclear RNAs (snRNAs), telomerase RNAs and long non-coding RNAs (lncRNAs). Within the integrator complex, INTS14 is part of the integrator tail module that acts as a platform for the recruitment of transcription factors at promoters. This is Integrator complex subunit 14 from Homo sapiens (Human).